A 141-amino-acid chain; its full sequence is Brain ribonuclease (141 aa).

The disordered stretch occupies residues 1–25 (KETAAAKFRRQHMDSGSSSSSNSNY). Positions 7 and 10 each coordinate substrate. His-12 serves as the catalytic Proton acceptor. Low complexity predominate over residues 15–24 (SGSSSSSNSN). 4 disulfide bridges follow: Cys-26-Cys-84, Cys-40-Cys-95, Cys-58-Cys-110, and Cys-65-Cys-72. A substrate-binding site is contributed by 41-45 (KPVNT). N-linked (GlcNAc...) asparagine glycosylation occurs at Asn-62. Residues Lys-66 and Arg-85 each coordinate substrate. His-119 serves as the catalytic Proton donor. Thr-129 is a glycosylation site (O-linked (GalNAc...) threonine).

The protein belongs to the pancreatic ribonuclease family.

It localises to the secreted. This Giraffa camelopardalis (Giraffe) protein is Brain ribonuclease (BRN).